Reading from the N-terminus, the 529-residue chain is Putative cysteine ligase BshC (529 aa).

A coiled-coil region spans residues 450–485 (VKQTKGLENLEKRLLKAQKRNLSDQLQRVIDLQCEL).

The protein belongs to the BshC family.

The chain is Putative cysteine ligase BshC from Flavobacterium johnsoniae (strain ATCC 17061 / DSM 2064 / JCM 8514 / BCRC 14874 / CCUG 350202 / NBRC 14942 / NCIMB 11054 / UW101) (Cytophaga johnsonae).